The following is an 89-amino-acid chain: MSITAERKQALVAEYANKVGDTGSPEVQIAVLSERISNLTNHFKSHKKDNHSRRGLLKMVSQRRRLLDYLKGVDQNRYQTLIKKLGLRR.

The protein belongs to the universal ribosomal protein uS15 family. Part of the 30S ribosomal subunit. Forms a bridge to the 50S subunit in the 70S ribosome, contacting the 23S rRNA.

In terms of biological role, one of the primary rRNA binding proteins, it binds directly to 16S rRNA where it helps nucleate assembly of the platform of the 30S subunit by binding and bridging several RNA helices of the 16S rRNA. Functionally, forms an intersubunit bridge (bridge B4) with the 23S rRNA of the 50S subunit in the ribosome. The chain is Small ribosomal subunit protein uS15 from Bartonella tribocorum (strain CIP 105476 / IBS 506).